Consider the following 117-residue polypeptide: Ribosome-binding factor A (117 aa).

This sequence belongs to the RbfA family. Monomer. Binds 30S ribosomal subunits, but not 50S ribosomal subunits or 70S ribosomes.

Its subcellular location is the cytoplasm. Functionally, one of several proteins that assist in the late maturation steps of the functional core of the 30S ribosomal subunit. Associates with free 30S ribosomal subunits (but not with 30S subunits that are part of 70S ribosomes or polysomes). Required for efficient processing of 16S rRNA. May interact with the 5'-terminal helix region of 16S rRNA. In Anaplasma marginale (strain St. Maries), this protein is Ribosome-binding factor A.